Consider the following 403-residue polypeptide: Tyrosine--tRNA ligase (403 aa).

The short motif at 42-51 (PTAPDLHLGH) is the 'HIGH' region element. Residues 226-230 (KMSKS) carry the 'KMSKS' region motif. ATP is bound at residue lysine 229. The 61-residue stretch at 336 to 396 (MPISAVLNKA…GKKAFGRVTL (61 aa)) folds into the S4 RNA-binding domain.

This sequence belongs to the class-I aminoacyl-tRNA synthetase family. TyrS type 2 subfamily. As to quaternary structure, homodimer.

It is found in the cytoplasm. It carries out the reaction tRNA(Tyr) + L-tyrosine + ATP = L-tyrosyl-tRNA(Tyr) + AMP + diphosphate + H(+). Its function is as follows. Catalyzes the attachment of tyrosine to tRNA(Tyr) in a two-step reaction: tyrosine is first activated by ATP to form Tyr-AMP and then transferred to the acceptor end of tRNA(Tyr). This is Tyrosine--tRNA ligase from Pseudomonas syringae pv. syringae (strain B728a).